Reading from the N-terminus, the 289-residue chain is Acetyl-coenzyme A carboxylase carboxyl transferase subunit beta (289 aa).

In terms of domain architecture, CoA carboxyltransferase N-terminal spans 28–289; that stretch reads VMTKCPKCKK…QGGEMAVWQS (262 aa). Residues C32, C35, C51, and C54 each coordinate Zn(2+). A C4-type zinc finger spans residues 32–54; that stretch reads CPKCKKIMYTKELLKNLKVCVNC.

This sequence belongs to the AccD/PCCB family. As to quaternary structure, acetyl-CoA carboxylase is a heterohexamer composed of biotin carboxyl carrier protein (AccB), biotin carboxylase (AccC) and two subunits each of ACCase subunit alpha (AccA) and ACCase subunit beta (AccD). It depends on Zn(2+) as a cofactor.

The protein resides in the cytoplasm. It carries out the reaction N(6)-carboxybiotinyl-L-lysyl-[protein] + acetyl-CoA = N(6)-biotinyl-L-lysyl-[protein] + malonyl-CoA. It functions in the pathway lipid metabolism; malonyl-CoA biosynthesis; malonyl-CoA from acetyl-CoA: step 1/1. Its function is as follows. Component of the acetyl coenzyme A carboxylase (ACC) complex. Biotin carboxylase (BC) catalyzes the carboxylation of biotin on its carrier protein (BCCP) and then the CO(2) group is transferred by the transcarboxylase to acetyl-CoA to form malonyl-CoA. This chain is Acetyl-coenzyme A carboxylase carboxyl transferase subunit beta, found in Bacillus cereus (strain ATCC 10987 / NRS 248).